The chain runs to 149 residues: 3-hydroxyacyl-[acyl-carrier-protein] dehydratase FabZ (149 aa).

His-53 is a catalytic residue.

Belongs to the thioester dehydratase family. FabZ subfamily.

The protein localises to the cytoplasm. The catalysed reaction is a (3R)-hydroxyacyl-[ACP] = a (2E)-enoyl-[ACP] + H2O. In terms of biological role, involved in unsaturated fatty acids biosynthesis. Catalyzes the dehydration of short chain beta-hydroxyacyl-ACPs and long chain saturated and unsaturated beta-hydroxyacyl-ACPs. This Polynucleobacter asymbioticus (strain DSM 18221 / CIP 109841 / QLW-P1DMWA-1) (Polynucleobacter necessarius subsp. asymbioticus) protein is 3-hydroxyacyl-[acyl-carrier-protein] dehydratase FabZ.